The following is a 527-amino-acid chain: Gustatory receptor for bitter taste 66a (527 aa).

Over 1-46 the chain is Cytoplasmic; the sequence is MAQAEDAVQPLLQQFQQLFFISKIAGILPQDLEKFRSRNLLEKSRN. A helical transmembrane segment spans residues 47 to 67; it reads GMIYMLSTLILYVVLYNILIY. Over 68 to 80 the chain is Extracellular; sequence SFGEEDRSLKASQ. The helical transmembrane segment at 81 to 101 threads the bilayer; the sequence is STLTFVIGLFLTYIGLIMMVS. Topologically, residues 102-144 are cytoplasmic; sequence DQLTALRNQGRIGELYERIRLVDERLYKEGCVMDNSTIGRRIR. Residues 145–165 traverse the membrane as a helical segment; the sequence is IMLIMTVIFELSILVSTYVKL. Topologically, residues 166-174 are extracellular; sequence VDYSQWMSL. The helical transmembrane segment at 175 to 195 threads the bilayer; it reads LWIVSAIPTFINTLDKIWFAV. Residues 196 to 345 lie on the Cytoplasmic side of the membrane; the sequence is SLYALKERFE…KALNELWSYP (150 aa). A helical transmembrane segment spans residues 346–366; the sequence is ILSLMAYGFLIFTAQLYFLYC. Residues 367-382 lie on the Extracellular side of the membrane; the sequence is ATQYQSIPSLFRSAKN. The helical transmembrane segment at 383-403 threads the bilayer; that stretch reads PFITVIVLSYTSGKCVYLIYL. Over 404–460 the chain is Cytoplasmic; it reads SWKTSQASKRTGISLHKCGVVADDNLLYEIVNHLSLKLLNHSVDFSACGFFTLDMET. A helical membrane pass occupies residues 461–481; the sequence is LYGVSGGITSYLIILIQFNLA. The Extracellular segment spans residues 482 to 527; it reads AQQAKEAIQTFNSLNDTAGLVGAATDMDNISSTLRDFVTTTMTPAV. 2 N-linked (GlcNAc...) asparagine glycosylation sites follow: N496 and N510.

This sequence belongs to the insect chemoreceptor superfamily. Gustatory receptor (GR) family. Gr66a subfamily. In terms of tissue distribution, taste hairs in labial palps, labral and cibarial sense organs and forelegs. In larvae, is expressed in neurons of the terminal external chemosensory organ, as well as in the dorsal, ventral, and posterior pharyngeal sense organs.

It is found in the cell membrane. Its function is as follows. Gustatory receptor required for response to the bitter in taste neurons. Gr66a cells respond to bitter compounds such as caffeine, theophylline, threonine or valine. Flies avoid bitter substances, suggesting that Gr66a neuron activity is sufficient to mediate avoidance behavior. Required for sensing and avoiding N,N-Diethyl-meta-toluamide (DEET), the most widely used insect repellent worldwide, as well as to L-canavanine, a plant-derived insecticide. Gr66a neurons are also involved in the sex-specific perception of molecules inducing male avoidance behavior, probably through sensing 7-tricosene (7-T), a male cuticular pheromone and leading to inhibition of male-male courtship. Finally, also plays a role in oviposition behavior, in which females evaluate their environment and choose to lay eggs on substrates they may find aversive in other contexts. This is Gustatory receptor for bitter taste 66a (Gr66a) from Drosophila melanogaster (Fruit fly).